The following is a 78-amino-acid chain: Large ribosomal subunit protein bL28 (78 aa).

Belongs to the bacterial ribosomal protein bL28 family.

This chain is Large ribosomal subunit protein bL28, found in Azoarcus sp. (strain BH72).